Reading from the N-terminus, the 336-residue chain is Protein-lysine N-methyltransferase EFM3 (336 aa).

Residues tryptophan 147, 173–175 (GTG), aspartate 196, leucine 232, and alanine 251 contribute to the S-adenosyl-L-methionine site.

The protein belongs to the class I-like SAM-binding methyltransferase superfamily. EEF2KMT family.

Its subcellular location is the cytoplasm. Functionally, S-adenosyl-L-methionine-dependent protein-lysine N-methyltransferase that methylates elongation factor 2. This Chaetomium thermophilum (strain DSM 1495 / CBS 144.50 / IMI 039719) (Thermochaetoides thermophila) protein is Protein-lysine N-methyltransferase EFM3.